The sequence spans 68 residues: uncharacterized protein (68 aa).

Residues 2–67 (KTITLNIKGI…VIEDAGFDAT (66 aa)) enclose the HMA domain. A metal cation-binding residues include cysteine 13 and cysteine 16.

This is an uncharacterized protein from Haemophilus influenzae (strain ATCC 51907 / DSM 11121 / KW20 / Rd).